The sequence spans 100 residues: Apolipoprotein C-II (100 aa).

Positions 1-22 are cleaved as a signal peptide; the sequence is MGSRFLLALFLVLLVLGCEVQA. Residues 66-74 form a lipid binding region; it reads SVDEKLRDM. The tract at residues 78–100 is lipoprotein lipase cofactor; sequence SSAAMTTYASIFTDQILTLLKGE.

It belongs to the apolipoprotein C2 family. In terms of processing, proapolipoprotein C-II is synthesized as a sialic acid containing glycoprotein which is subsequently desialylated prior to its proteolytic processing. Post-translationally, proapolipoprotein C-II, the major form found in plasma undergoes proteolytic cleavage of its N-terminal hexapeptide to generate the mature form apolipoprotein C-II, which occurs as the minor form in plasma.

The protein localises to the secreted. Its function is as follows. Component of chylomicrons, very low-density lipoproteins (VLDL), low-density lipoproteins (LDL), and high-density lipoproteins (HDL) in plasma. Plays an important role in lipoprotein metabolism as an activator of lipoprotein lipase. The sequence is that of Apolipoprotein C-II (APOC2) from Ellobius talpinus (Northern mole vole).